The chain runs to 582 residues: Fructose-1,6-bisphosphatase class 3 (582 aa).

The protein belongs to the FBPase class 3 family. It depends on Mn(2+) as a cofactor.

It catalyses the reaction beta-D-fructose 1,6-bisphosphate + H2O = beta-D-fructose 6-phosphate + phosphate. It participates in carbohydrate biosynthesis; gluconeogenesis. In Saccharophagus degradans (strain 2-40 / ATCC 43961 / DSM 17024), this protein is Fructose-1,6-bisphosphatase class 3.